A 150-amino-acid polypeptide reads, in one-letter code: C-type lectin 16 (150 aa).

The first 27 residues, 1 to 27 (MKRVRVKVIFVSFGLLVVFLSLSGTAA), serve as a signal peptide directing secretion. 3 cysteine pairs are disulfide-bonded: Cys29/Cys40, Cys57/Cys146, and Cys123/Cys138. One can recognise a C-type lectin domain in the interval 36–147 (YEGHCYKPFN…CRMLARFVCE (112 aa)).

The protein belongs to the snaclec family. Heteromultimer; disulfide-linked. Expressed by the venom gland.

The protein localises to the secreted. In terms of biological role, interferes with one step of hemostasis (modulation of platelet aggregation, or coagulation cascade, for example). This Crotalus adamanteus (Eastern diamondback rattlesnake) protein is C-type lectin 16.